Reading from the N-terminus, the 24-residue chain is Brevinin-1Lb (24 aa).

Cysteines 18 and 24 form a disulfide.

Expressed by the skin glands.

It is found in the secreted. Functionally, antibacterial activity against Gram-positive bacterium S.aureus and Gram-negative bacterium E.coli. The protein is Brevinin-1Lb of Rana luteiventris (Columbia spotted frog).